We begin with the raw amino-acid sequence, 295 residues long: Ribosomal RNA small subunit methyltransferase A (295 aa).

N28, L30, G55, E76, D101, and N131 together coordinate S-adenosyl-L-methionine.

This sequence belongs to the class I-like SAM-binding methyltransferase superfamily. rRNA adenine N(6)-methyltransferase family. RsmA subfamily.

The protein localises to the cytoplasm. It catalyses the reaction adenosine(1518)/adenosine(1519) in 16S rRNA + 4 S-adenosyl-L-methionine = N(6)-dimethyladenosine(1518)/N(6)-dimethyladenosine(1519) in 16S rRNA + 4 S-adenosyl-L-homocysteine + 4 H(+). Functionally, specifically dimethylates two adjacent adenosines (A1518 and A1519) in the loop of a conserved hairpin near the 3'-end of 16S rRNA in the 30S particle. May play a critical role in biogenesis of 30S subunits. In Pelotomaculum thermopropionicum (strain DSM 13744 / JCM 10971 / SI), this protein is Ribosomal RNA small subunit methyltransferase A.